Consider the following 506-residue polypeptide: BTB/POZ domain-containing protein 16 (506 aa).

One can recognise a BTB domain in the interval 150–206; sequence INDPAVTRVAFALALKNLYMNEVEMTVDNVLGVLASAHILQFNRLFRKCVSTMLNRL.

The chain is BTB/POZ domain-containing protein 16 (Btbd16) from Rattus norvegicus (Rat).